We begin with the raw amino-acid sequence, 284 residues long: Trimeric intracellular cation channel type B-A (284 aa).

Residues 1-15 (MESLSELSVQFSQLS) lie on the Lumenal side of the membrane. A helical transmembrane segment spans residues 16 to 33 (MFPFFDMAHYVVSVMSAR). The Cytoplasmic segment spans residues 34 to 46 (EQAGALDIAARSP). Residues 47 to 68 (MASWFSAMLYCFGGGILSSILL) traverse the membrane as a helical segment. Residues 69–79 (AEPPIAVLSNT) are Lumenal-facing. The chain crosses the membrane as a helical span at residues 80–99 (TNIMLASTIWYMVYYFPYDL). Over 100 to 102 (FYN) the chain is Cytoplasmic. Residues 103–121 (CFFFLPIRLIIAGMKEVTR) traverse the membrane as a helical segment. Lys117 and Arg121 together coordinate a 1,2-diacyl-sn-glycero-3-phospho-(1D-myo-inositol-4,5-bisphosphate). At 122–137 (TWKILSGVTHAHSHYK) the chain is on the lumenal side. A helical transmembrane segment spans residues 138–155 (DALLVMITIGWARGAGGG). Residues 156–177 (LISNFEQLVRGVWKPESNEFLK) lie on the Cytoplasmic side of the membrane. Residues 178–195 (MSYPVKVTLIGAVLFTLQ) traverse the membrane as a helical segment. Residues 196–206 (HGHYLPISRHN) lie on the Lumenal side of the membrane. A helical membrane pass occupies residues 207–224 (LMLIYTMFLVLIKVTMML). Over 225 to 284 (THSTASPFLPLETPLQRILFGQRQKPSEVRQSASSSGAKGKPSKKTLDKDSGEQSKKKDS) the chain is Cytoplasmic. The segment at 246–284 (QRQKPSEVRQSASSSGAKGKPSKKTLDKDSGEQSKKKDS) is disordered. Residues 269 to 284 (KTLDKDSGEQSKKKDS) show a composition bias toward basic and acidic residues.

The protein belongs to the TMEM38 family. Homotrimer; conformation seems to be controled by binding to diacylglycerol (DAG).

It is found in the endoplasmic reticulum membrane. It carries out the reaction K(+)(in) = K(+)(out). Channel activity is activated by increased cytosolic Ca(2+) levels and blocked by luminal high Ca(2+) levels. In terms of biological role, intracellular monovalent cation channel required for maintenance of rapid intracellular calcium release. Acts as a potassium counter-ion channel that functions in synchronization with calcium release from intracellular stores. Activated by increased cytosolic Ca(2+) levels. The sequence is that of Trimeric intracellular cation channel type B-A (tmem38b-a) from Xenopus laevis (African clawed frog).